Consider the following 157-residue polypeptide: Cytochrome c-type biogenesis protein CcmE (157 aa).

Residues 1-8 (MNPLRRKR) are Cytoplasmic-facing. Residues 9-29 (LLIILAVLGGVGLALTLALSA) traverse the membrane as a helical; Signal-anchor for type II membrane protein segment. The Periplasmic portion of the chain corresponds to 30–157 (LKENINLFYT…ASMPARQADR (128 aa)). Residues His124 and Tyr128 each contribute to the heme site. Residues 132–157 (EVSKALRESGQATPAPASMPARQADR) are disordered.

This sequence belongs to the CcmE/CycJ family.

The protein resides in the cell inner membrane. Heme chaperone required for the biogenesis of c-type cytochromes. Transiently binds heme delivered by CcmC and transfers the heme to apo-cytochromes in a process facilitated by CcmF and CcmH. The sequence is that of Cytochrome c-type biogenesis protein CcmE from Pseudomonas syringae pv. tomato (strain ATCC BAA-871 / DC3000).